Consider the following 113-residue polypeptide: Large ribosomal subunit protein bL17 (113 aa).

The protein belongs to the bacterial ribosomal protein bL17 family. As to quaternary structure, part of the 50S ribosomal subunit. Contacts protein L32.

This chain is Large ribosomal subunit protein bL17, found in Clostridium botulinum (strain Alaska E43 / Type E3).